We begin with the raw amino-acid sequence, 110 residues long: CHH-like protein (110 aa).

The N-terminal stretch at 1 to 23 (MHLSSVQFAWAALVALAVSAAGA) is a signal peptide. The propeptide occupies 24–35 (LPSSAPHHVERR). 3 disulfides stabilise this stretch: C42–C78, C58–C74, and C61–C87. V107 is subject to Valine amide.

It belongs to the arthropod CHH/MIH/GIH/VIH hormone family.

Its subcellular location is the secreted. The protein is CHH-like protein (CHHL) of Bombyx mori (Silk moth).